The chain runs to 371 residues: Meiotic drive suppressor wtf18 (371 aa).

Helical transmembrane passes span 86–106 (FLLR…TAWV), 120–140 (AFSV…FCFF), 153–173 (VTVI…AQCV), 197–217 (DLVV…FGCV), 233–253 (CSIS…IWTL), 257–277 (LFGL…TKGL), 287–307 (ATGY…LFFY), and 321–341 (FIGN…GGIG).

It belongs to the WTF family. As to quaternary structure, homomer. Interacts with other proteins that exhibit high sequence similarity.

The protein resides in the spore membrane. It localises to the vacuole membrane. Acts as a suppressor component of the dual wtf meiotic drive system, and can suppress but not confer meiotic drive by compatible poisons. Wtf meiotic drive systems promote unequal transmission of alleles from the parental zygote to progeny spores by encoding a poison and an antidote from the same locus; the poison is trans-acting and forms toxic aggregates in all spores within an ascus, wherease the antidote is spore-specific and targets aggregates for degradation by the vacuole. Meiotic drive by wtf systems therefore lead to poisoning of all progeny that do not inherit the dual poison/antidote allele, or express a compatible antidote. This is Meiotic drive suppressor wtf18 from Schizosaccharomyces kambucha (Fission yeast).